A 325-amino-acid chain; its full sequence is Putative HTH-type transcriptional regulatory protein MK1005 (325 aa).

Positions 128–190 (VDELDVSRVR…FERRVAELLE (63 aa)) constitute an HTH cro/C1-type domain. A DNA-binding region (H-T-H motif) is located at residues 139–158 (RQLRREGGRITLARAEEADV).

This is Putative HTH-type transcriptional regulatory protein MK1005 from Methanopyrus kandleri (strain AV19 / DSM 6324 / JCM 9639 / NBRC 100938).